Here is a 341-residue protein sequence, read N- to C-terminus: 4-amino-5-hydroxymethyl-2-methylpyrimidine phosphate synthase (341 aa).

Lys-62 bears the N6-(pyridoxal phosphate)lysine mark. Residue His-66 is part of the active site. 115–118 is a pyridoxal 5'-phosphate binding site; it reads GEFG. A CCCFC; essential for catalytic activity, may be the site of iron coordination motif is present at residues 195 to 199; the sequence is CCCFC.

The protein belongs to the NMT1/THI5 family. Homodimer. Requires Fe cation as cofactor.

The enzyme catalyses N(6)-(pyridoxal phosphate)-L-lysyl-[4-amino-5-hydroxymethyl-2-methylpyrimidine phosphate synthase] + L-histidyl-[4-amino-5-hydroxymethyl-2-methylpyrimidine phosphate synthase] + 2 Fe(3+) + 4 H2O = L-lysyl-[4-amino-5-hydroxymethyl-2-methylpyrimidine phosphate synthase] + (2S)-2-amino-5-hydroxy-4-oxopentanoyl-[4-amino-5-hydroxymethyl-2-methylpyrimidine phosphate synthase] + 4-amino-2-methyl-5-(phosphooxymethyl)pyrimidine + 3-oxopropanoate + 2 Fe(2+) + 2 H(+). The protein operates within cofactor biosynthesis; thiamine diphosphate biosynthesis. Its function is as follows. Responsible for the formation of the pyrimidine heterocycle in the thiamine biosynthesis pathway. Catalyzes the formation of hydroxymethylpyrimidine phosphate (HMP-P) from histidine and pyridoxal phosphate (PLP). The protein uses PLP and the active site histidine to form HMP-P, generating an inactive enzyme. The enzyme can only undergo a single turnover, which suggests it is a suicide enzyme. The chain is 4-amino-5-hydroxymethyl-2-methylpyrimidine phosphate synthase from Uromyces fabae (Rust fungus).